The chain runs to 183 residues: MFQVEMTASVREAFGKGPMRRLRQQGITPAVVYGAGKAALPLQMDAKILMTQLLEFSRVNTVVSLSVDGQDAKNVVIAEIQSDPVTDALVHVDFCEIDLDQAREFTVPVTFEGTPKGVDLGGRLESHLTSVILKAKPLDIPNEFVINIADLAIDEQLTVADVALAENVVMVTPAARVMVAVLK.

Belongs to the bacterial ribosomal protein bL25 family. CTC subfamily. As to quaternary structure, part of the 50S ribosomal subunit; part of the 5S rRNA/L5/L18/L25 subcomplex. Contacts the 5S rRNA. Binds to the 5S rRNA independently of L5 and L18.

This is one of the proteins that binds to the 5S RNA in the ribosome where it forms part of the central protuberance. In Desulfotalea psychrophila (strain LSv54 / DSM 12343), this protein is Large ribosomal subunit protein bL25.